Consider the following 168-residue polypeptide: Probable chorismate pyruvate-lyase (168 aa).

Positions 75, 114, and 155 each coordinate substrate.

It belongs to the UbiC family.

The protein localises to the cytoplasm. It catalyses the reaction chorismate = 4-hydroxybenzoate + pyruvate. It functions in the pathway cofactor biosynthesis; ubiquinone biosynthesis. Its function is as follows. Removes the pyruvyl group from chorismate, with concomitant aromatization of the ring, to provide 4-hydroxybenzoate (4HB) for the ubiquinone pathway. The chain is Probable chorismate pyruvate-lyase from Psychrobacter cryohalolentis (strain ATCC BAA-1226 / DSM 17306 / VKM B-2378 / K5).